The chain runs to 348 residues: Eukaryotic translation initiation factor 3 subunit I (348 aa).

WD repeat units lie at residues 8–49, 51–91, 93–135, 147–186, 196–238, and 294–333; these read GHER…GTFE, HMGT…YTYE, PTPV…PKNQ, DGAK…FIDS, EKIH…KVYK, and GHFG…YDFE.

Belongs to the eIF-3 subunit I family. In terms of assembly, component of the eukaryotic translation initiation factor 3 (eIF-3) complex.

It localises to the cytoplasm. Its function is as follows. Component of the eukaryotic translation initiation factor 3 (eIF-3) complex, which is involved in protein synthesis of a specialized repertoire of mRNAs and, together with other initiation factors, stimulates binding of mRNA and methionyl-tRNAi to the 40S ribosome. The eIF-3 complex specifically targets and initiates translation of a subset of mRNAs involved in cell proliferation. The polypeptide is Eukaryotic translation initiation factor 3 subunit I (Meyerozyma guilliermondii (strain ATCC 6260 / CBS 566 / DSM 6381 / JCM 1539 / NBRC 10279 / NRRL Y-324) (Yeast)).